The sequence spans 893 residues: AP-4 complex accessory subunit RUSC1 (893 aa).

4 disordered regions span residues 31–223 (ELRE…GKAE), 237–332 (EKTE…KDRS), 339–358 (SPDTELPPTGSLGGSLAPPR), and 366–444 (LRSR…RAHA). The segment covering 77–87 (HGSSIENQQDP) has biased composition (polar residues). Low complexity-rich tracts occupy residues 95–117 (SPSDPGCSSSLSSCSDLSPDESP) and 149–165 (PSTCSPDSFCCSPDSCS). A compositionally biased stretch (polar residues) spans 177–187 (SNCNALTTCQD). Residues 237-257 (EKTEAGWKTIEDSDSGRKTDE) are compositionally biased toward basic and acidic residues. Composition is skewed to pro residues over residues 373-382 (QPPPVPPRDP) and 390-399 (PPRPPPPPVP). An interaction with TRAF6 region spans residues 463-598 (MAEAQSGTGQ…FHAFILGLLN (136 aa)). The 145-residue stretch at 515 to 659 (DVGHLVLTTL…LTFHLDLLFE (145 aa)) folds into the RUN domain. The interaction with IKBKG stretch occupies residues 599–665 (TKQLELWFSS…LLFEHHHHLP (67 aa)). Disordered stretches follow at residues 700–721 (RGTSGESTTDSSTPSARPPAGS) and 751–772 (HGTTAEAAQEAPPPTEQTTPGR). Composition is skewed to low complexity over residues 702–714 (TSGESTTDSSTPS) and 754–770 (TAEAAQEAPPPTEQTTP). The region spanning 835–893 (QADRAVRALCDHTAAGPDQLSFQRGELLRVIATVDEDWLRCGRDGVEGLVPVGYTSLVL) is the SH3 domain.

Associated component of the adapter-like complex 4 (AP-4). Interacts with IKBKG and TRAF6. Interacts with F-actin, acetylated actin, TUBB3, STX1A, KIF5B and KLC1. Phosphorylated on serine residues following nuclear translocation. Post-translationally, polyubiquitinated; polyubiquitination involves TRAF6. As to expression, expressed in brain, brain stem and spinal cord (at protein level).

The protein resides in the cytoplasm. The protein localises to the nucleus. Its subcellular location is the cytoskeleton. It localises to the cytoplasmic vesicle. It is found in the early endosome. The protein resides in the postsynaptic density. The protein localises to the golgi apparatus. In terms of biological role, associates with the adapter-like complex 4 (AP-4) and may therefore play a role in vesicular trafficking of proteins at the trans-Golgi network. Signaling adapter which plays a role in neuronal differentiation. Involved in regulation of NGF-dependent neurite outgrowth. May play a role in neuronal vesicular trafficking, specifically involving pre-synaptic membrane proteins. Seems to be involved in signaling pathways that are regulated by the prolonged activation of MAPK. Can regulate the polyubiquitination of IKBKG and thus may be involved in regulation of the NF-kappa-B pathway. The protein is AP-4 complex accessory subunit RUSC1 of Mus musculus (Mouse).